The sequence spans 473 residues: Putative F-box/LRR-repeat protein At3g59170 (473 aa).

Residues 6–54 (KDMINVLPDALLCHILSFLTTKEAASTSLLSRRWRYLLAFVPNLEFDDS) form the F-box domain. 5 LRR repeats span residues 168-194 (TIKI…YLQS), 196-221 (MFDE…VLDG), 229-254 (SFTV…GYMH), 333-364 (VLYL…TIKS), and 365-390 (DPNV…VFQG).

This chain is Putative F-box/LRR-repeat protein At3g59170, found in Arabidopsis thaliana (Mouse-ear cress).